The following is a 450-amino-acid chain: Casein kinase 1-like protein 1 (450 aa).

The Protein kinase domain maps to 9–278 (FRLGRKIGSG…LKRIFRDLFI (270 aa)). ATP is bound by residues 15–23 (IGSGSFGEI) and Lys38. Catalysis depends on Asp128, which acts as the Proton acceptor. The disordered stretch occupies residues 311–450 (AVGTSAALPP…LQVSDEHHPH (140 aa)). A compositionally biased stretch (basic and acidic residues) spans 328 to 342 (YTGEEEGRPHMESSR). Polar residues predominate over residues 349–365 (LDNSGNISNQPTSSSAR). A compositionally biased stretch (low complexity) spans 371–382 (SSSLFAQSAGSS).

It belongs to the protein kinase superfamily. CK1 Ser/Thr protein kinase family. Casein kinase I subfamily. In terms of assembly, monomer. Autophosphorylated. In terms of tissue distribution, expressed in flowers.

It localises to the cytoplasm. The protein resides in the cell junction. It is found in the plasmodesma. The catalysed reaction is L-seryl-[protein] + ATP = O-phospho-L-seryl-[protein] + ADP + H(+). It catalyses the reaction L-threonyl-[protein] + ATP = O-phospho-L-threonyl-[protein] + ADP + H(+). Casein kinases are operationally defined by their preferential utilization of acidic proteins such as caseins as substrates. It can phosphorylate a large number of proteins. The protein is Casein kinase 1-like protein 1 of Arabidopsis thaliana (Mouse-ear cress).